We begin with the raw amino-acid sequence, 595 residues long: Inactive glycosyltransferase 25 family member 3 (595 aa).

A signal peptide spans 1 to 22 (MRAARAAPLLQLLLLLGPWLEA). N-linked (GlcNAc...) asparagine glycosylation is found at asparagine 75, asparagine 153, asparagine 237, and asparagine 360. Residues 548 to 595 (DTETSSPWDDDSGRLISWSGSQKTLRSPRLDLTGSSGHSLQPQPRDEL) are disordered. Residues 580-589 (TGSSGHSLQP) show a composition bias toward polar residues. The Prevents secretion from ER signature appears at 592–595 (RDEL).

The protein belongs to the glycosyltransferase 25 family. In terms of tissue distribution, ubiquitous. Highly expressed in secretory and nervous tissues.

Its subcellular location is the endoplasmic reticulum lumen. Probable cell adhesion protein involved in leukocyte transmigration across the blood-brain barrier. Does not express any beta-galactosyltransferase activity in vitro. The polypeptide is Inactive glycosyltransferase 25 family member 3 (CERCAM) (Homo sapiens (Human)).